The following is a 394-amino-acid chain: Xylose isomerase (394 aa).

Active-site residues include H54 and D57. Mg(2+)-binding residues include E181, E217, H220, D245, D255, D257, and D292.

It belongs to the xylose isomerase family. Homotetramer. The cofactor is Mg(2+).

It localises to the cytoplasm. It carries out the reaction alpha-D-xylose = alpha-D-xylulofuranose. The protein is Xylose isomerase (xylA) of Actinoplanes sp. (strain ATCC 31351 / 3876) (Ampullariella sp.).